The primary structure comprises 65 residues: Small ribosomal subunit protein bS21A (65 aa).

The protein belongs to the bacterial ribosomal protein bS21 family.

This is Small ribosomal subunit protein bS21A from Francisella tularensis subsp. holarctica (strain LVS).